Reading from the N-terminus, the 1176-residue chain is DNA-directed RNA polymerase subunit beta (1176 aa).

Residues 13–30 (TDASLHQGRPQSSSNSSV) show a composition bias toward polar residues. Residues 13-35 (TDASLHQGRPQSSSNSSVPGAPN) form a disordered region.

It belongs to the RNA polymerase beta chain family. As to quaternary structure, the RNAP catalytic core consists of 2 alpha, 1 beta, 1 beta' and 1 omega subunit. When a sigma factor is associated with the core the holoenzyme is formed, which can initiate transcription.

It carries out the reaction RNA(n) + a ribonucleoside 5'-triphosphate = RNA(n+1) + diphosphate. In terms of biological role, DNA-dependent RNA polymerase catalyzes the transcription of DNA into RNA using the four ribonucleoside triphosphates as substrates. In Mycobacterium marinum (strain ATCC BAA-535 / M), this protein is DNA-directed RNA polymerase subunit beta.